A 583-amino-acid polypeptide reads, in one-letter code: Estrogen receptor (583 aa).

The modulating stretch occupies residues 1–138 (MYPEESRGSG…GFEITKNTRF (138 aa)). NR C4-type zinc fingers lie at residues 139 to 159 (CAVC…CEGC) and 175 to 199 (CPAT…LRKC). Positions 139–204 (CAVCSDYASG…RLRKCYEVGM (66 aa)) form a DNA-binding region, nuclear receptor. The segment at 205–265 (MKGGMRKDRG…PGGRSSLNNM (61 aa)) is hinge. The tract at residues 220-263 (EKHGPAQRQTSQNLPTHKASPQDGRKRAMSSSSTSGPGGRSSLN) is disordered. The NR LBD domain maps to 266-501 (PPDQVLLLLQ…DLLLEMLDAH (236 aa)). The tract at residues 506–583 (PVKPSQSWSQ…GSHSDCTRIP (78 aa)) is disordered. The span at 539-551 (ASSAGSSSGPQGS) shows a compositional bias: low complexity.

Belongs to the nuclear hormone receptor family. NR3 subfamily. Binds DNA as a homodimer. Can form a heterodimer with ER-beta.

Its subcellular location is the nucleus. In terms of biological role, the steroid hormones and their receptors are involved in the regulation of eukaryotic gene expression and affect cellular proliferation and differentiation in target tissues. This is Estrogen receptor (esr1) from Oreochromis aureus (Israeli tilapia).